We begin with the raw amino-acid sequence, 540 residues long: Pentatricopeptide repeat-containing protein At1g80880, mitochondrial (540 aa).

The N-terminal 87 residues, M1–L87, are a transit peptide targeting the mitochondrion. PPR repeat units lie at residues D154–V184, T188–P222, Y223–L253, D257–P292, N293–P327, G328–P362, D363–P397, F402–P428, T429–A463, and N464–G498. Positions V514–K540 are disordered.

This sequence belongs to the PPR family. P subfamily.

It localises to the mitochondrion. In Arabidopsis thaliana (Mouse-ear cress), this protein is Pentatricopeptide repeat-containing protein At1g80880, mitochondrial.